We begin with the raw amino-acid sequence, 145 residues long: Large ribosomal subunit protein uL11 (145 aa).

It belongs to the universal ribosomal protein uL11 family. Part of the ribosomal stalk of the 50S ribosomal subunit. Interacts with L10 and the large rRNA to form the base of the stalk. L10 forms an elongated spine to which L12 dimers bind in a sequential fashion forming a multimeric L10(L12)X complex. Post-translationally, one or more lysine residues are methylated.

Forms part of the ribosomal stalk which helps the ribosome interact with GTP-bound translation factors. This is Large ribosomal subunit protein uL11 from Persephonella marina (strain DSM 14350 / EX-H1).